The primary structure comprises 95 residues: MANSASAIKRIELNERNRLRNKTYKSMLKTYYKKCIVAIETTNNNDLETSNLRELVAITQSKIDKAVQKGIIHSNNGSAKKAKLTKRLKEKKISL.

A disordered region spans residues 76 to 95 (NGSAKKAKLTKRLKEKKISL). A compositionally biased stretch (basic residues) spans 80–95 (KKAKLTKRLKEKKISL).

Belongs to the bacterial ribosomal protein bS20 family.

It localises to the plastid. The protein localises to the chloroplast. Its function is as follows. Binds directly to 16S ribosomal RNA. The sequence is that of Small ribosomal subunit protein bS20c from Guillardia theta (Cryptophyte).